The chain runs to 218 residues: Protein GrpE (218 aa).

Positions 1-78 (MSEFNKDDYL…DSADTLTPLG (78 aa)) are disordered. Residues 14–58 (PDPSDAEAAAQASSGADASAESGSAQDSAAQAPSNEGADAAPAAA) are compositionally biased toward low complexity.

This sequence belongs to the GrpE family. As to quaternary structure, homodimer.

The protein localises to the cytoplasm. Its function is as follows. Participates actively in the response to hyperosmotic and heat shock by preventing the aggregation of stress-denatured proteins, in association with DnaK and GrpE. It is the nucleotide exchange factor for DnaK and may function as a thermosensor. Unfolded proteins bind initially to DnaJ; upon interaction with the DnaJ-bound protein, DnaK hydrolyzes its bound ATP, resulting in the formation of a stable complex. GrpE releases ADP from DnaK; ATP binding to DnaK triggers the release of the substrate protein, thus completing the reaction cycle. Several rounds of ATP-dependent interactions between DnaJ, DnaK and GrpE are required for fully efficient folding. This chain is Protein GrpE, found in Bifidobacterium longum (strain NCC 2705).